Reading from the N-terminus, the 422-residue chain is Mitochondrial distribution and morphology protein 12 (422 aa).

The 386-residue stretch at 1–386 (MSFDINWNQL…WPSWICIDMN (386 aa)) folds into the SMP-LTD domain. 2 disordered regions span residues 74-134 (GATN…HDLG) and 387-422 (DDGDDDDDDEVEDSNVSDGDGKDNDGKHGDGPTHEV). 2 stretches are compositionally biased toward acidic residues: residues 109 to 130 (FDDDDDDDEGVDEDDDDDEYDD) and 387 to 401 (DDGDDDDDDEVEDSN). Basic and acidic residues predominate over residues 405–422 (GDGKDNDGKHGDGPTHEV).

The protein belongs to the MDM12 family. In terms of assembly, component of the ER-mitochondria encounter structure (ERMES) or MDM complex, composed of MMM1, MDM10, MDM12 and MDM34. An MMM1 homodimer associates with one molecule of MDM12 on each side in a pairwise head-to-tail manner, and the SMP-LTD domains of MMM1 and MDM12 generate a continuous hydrophobic tunnel for phospholipid trafficking.

The protein localises to the mitochondrion outer membrane. It is found in the endoplasmic reticulum membrane. Its function is as follows. Component of the ERMES/MDM complex, which serves as a molecular tether to connect the endoplasmic reticulum (ER) and mitochondria. Components of this complex are involved in the control of mitochondrial shape and protein biogenesis, and function in nonvesicular lipid trafficking between the ER and mitochondria. MDM12 is required for the interaction of the ER-resident membrane protein MMM1 and the outer mitochondrial membrane-resident beta-barrel protein MDM10. The MDM12-MMM1 subcomplex functions in the major beta-barrel assembly pathway that is responsible for biogenesis of all mitochondrial outer membrane beta-barrel proteins, and acts in a late step after the SAM complex. The MDM10-MDM12-MMM1 subcomplex further acts in the TOM40-specific pathway after the action of the MDM12-MMM1 complex. Essential for establishing and maintaining the structure of mitochondria and maintenance of mtDNA nucleoids. The polypeptide is Mitochondrial distribution and morphology protein 12 (Candida dubliniensis (strain CD36 / ATCC MYA-646 / CBS 7987 / NCPF 3949 / NRRL Y-17841) (Yeast)).